Consider the following 532-residue polypeptide: FRIGIDA-like protein 4a (532 aa).

The disordered stretch occupies residues 406–432; sequence KTEKRKPAAVPANKRTRASYNGPMPPA.

This sequence belongs to the Frigida family. As to expression, expressed in leaves, shoot apex, flowers and during seed development.

In Arabidopsis thaliana (Mouse-ear cress), this protein is FRIGIDA-like protein 4a (FRL4A).